Reading from the N-terminus, the 140-residue chain is Phosphoribosyl-AMP cyclohydrolase (140 aa).

D85 lines the Mg(2+) pocket. C86 is a Zn(2+) binding site. Positions 87 and 89 each coordinate Mg(2+). The Zn(2+) site is built by C102 and C109.

This sequence belongs to the PRA-CH family. As to quaternary structure, homodimer. Requires Mg(2+) as cofactor. It depends on Zn(2+) as a cofactor.

It localises to the cytoplasm. The catalysed reaction is 1-(5-phospho-beta-D-ribosyl)-5'-AMP + H2O = 1-(5-phospho-beta-D-ribosyl)-5-[(5-phospho-beta-D-ribosylamino)methylideneamino]imidazole-4-carboxamide. It functions in the pathway amino-acid biosynthesis; L-histidine biosynthesis; L-histidine from 5-phospho-alpha-D-ribose 1-diphosphate: step 3/9. In terms of biological role, catalyzes the hydrolysis of the adenine ring of phosphoribosyl-AMP. This chain is Phosphoribosyl-AMP cyclohydrolase, found in Bradyrhizobium diazoefficiens (strain JCM 10833 / BCRC 13528 / IAM 13628 / NBRC 14792 / USDA 110).